A 195-amino-acid polypeptide reads, in one-letter code: dCTP deaminase (195 aa).

Residues 110–115 (RSSLAR), aspartate 128, 136–138 (VLE), tyrosine 171, lysine 178, and glutamine 182 contribute to the dCTP site. Residue glutamate 138 is the Proton donor/acceptor of the active site.

The protein belongs to the dCTP deaminase family. In terms of assembly, homotrimer.

The catalysed reaction is dCTP + H2O + H(+) = dUTP + NH4(+). Its pathway is pyrimidine metabolism; dUMP biosynthesis; dUMP from dCTP (dUTP route): step 1/2. Catalyzes the deamination of dCTP to dUTP. The chain is dCTP deaminase from Idiomarina loihiensis (strain ATCC BAA-735 / DSM 15497 / L2-TR).